The chain runs to 946 residues: Probable outer membrane protein pmp18 (946 aa).

The signal sequence occupies residues 1 to 16 (MQNNRSLSKSSFFVGA). Residues 668–946 (QGQIAPTASG…YLHAGTTFKF (279 aa)) enclose the Autotransporter domain.

Belongs to the PMP outer membrane protein family.

Its subcellular location is the secreted. It is found in the cell wall. The protein localises to the cell outer membrane. In Chlamydia pneumoniae (Chlamydophila pneumoniae), this protein is Probable outer membrane protein pmp18 (pmp18).